The primary structure comprises 58 residues: Photosystem II reaction center protein K (58 aa).

A propeptide spanning residues M1–A21 is cleaved from the precursor. The helical transmembrane segment at I29–F49 threads the bilayer.

Belongs to the PsbK family. PSII is composed of 1 copy each of membrane proteins PsbA, PsbB, PsbC, PsbD, PsbE, PsbF, PsbH, PsbI, PsbJ, PsbK, PsbL, PsbM, PsbT, PsbX, PsbY, PsbZ, Psb30/Ycf12, at least 3 peripheral proteins of the oxygen-evolving complex and a large number of cofactors. It forms dimeric complexes.

Its subcellular location is the plastid. The protein resides in the chloroplast thylakoid membrane. In terms of biological role, one of the components of the core complex of photosystem II (PSII). PSII is a light-driven water:plastoquinone oxidoreductase that uses light energy to abstract electrons from H(2)O, generating O(2) and a proton gradient subsequently used for ATP formation. It consists of a core antenna complex that captures photons, and an electron transfer chain that converts photonic excitation into a charge separation. The polypeptide is Photosystem II reaction center protein K (Physcomitrium patens (Spreading-leaved earth moss)).